The sequence spans 353 residues: Ferredoxin--NADP reductase 1 (353 aa).

FAD-binding residues include T14, D33, Q41, Y46, A86, F121, D289, and T330.

Belongs to the ferredoxin--NADP reductase type 2 family. As to quaternary structure, homodimer. FAD serves as cofactor.

It catalyses the reaction 2 reduced [2Fe-2S]-[ferredoxin] + NADP(+) + H(+) = 2 oxidized [2Fe-2S]-[ferredoxin] + NADPH. This is Ferredoxin--NADP reductase 1 from Christiangramia forsetii (strain DSM 17595 / CGMCC 1.15422 / KT0803) (Gramella forsetii).